Reading from the N-terminus, the 147-residue chain is Transcriptional regulator MraZ (147 aa).

SpoVT-AbrB domains lie at 5 to 52 and 81 to 124; these read NHPT…PMEE and GQVV…NAEH.

The protein belongs to the MraZ family. Forms oligomers.

The protein localises to the cytoplasm. Its subcellular location is the nucleoid. The chain is Transcriptional regulator MraZ from Koribacter versatilis (strain Ellin345).